Reading from the N-terminus, the 159-residue chain is NADH-quinone oxidoreductase subunit B (159 aa).

[4Fe-4S] cluster is bound by residues Cys32, Cys33, Cys97, and Cys126.

The protein belongs to the complex I 20 kDa subunit family. NDH-1 is composed of 14 different subunits. Subunits NuoB, C, D, E, F, and G constitute the peripheral sector of the complex. It depends on [4Fe-4S] cluster as a cofactor.

Its subcellular location is the cell inner membrane. The enzyme catalyses a quinone + NADH + 5 H(+)(in) = a quinol + NAD(+) + 4 H(+)(out). In terms of biological role, NDH-1 shuttles electrons from NADH, via FMN and iron-sulfur (Fe-S) centers, to quinones in the respiratory chain. The immediate electron acceptor for the enzyme in this species is believed to be ubiquinone. Couples the redox reaction to proton translocation (for every two electrons transferred, four hydrogen ions are translocated across the cytoplasmic membrane), and thus conserves the redox energy in a proton gradient. This Helicobacter pylori (strain P12) protein is NADH-quinone oxidoreductase subunit B.